A 177-amino-acid polypeptide reads, in one-letter code: Large ribosomal subunit protein uL6 (177 aa).

This sequence belongs to the universal ribosomal protein uL6 family. Part of the 50S ribosomal subunit.

Functionally, this protein binds to the 23S rRNA, and is important in its secondary structure. It is located near the subunit interface in the base of the L7/L12 stalk, and near the tRNA binding site of the peptidyltransferase center. This chain is Large ribosomal subunit protein uL6, found in Rubrobacter xylanophilus (strain DSM 9941 / JCM 11954 / NBRC 16129 / PRD-1).